The sequence spans 201 residues: Small ribosomal subunit protein uS4 (201 aa).

The S4 RNA-binding domain maps to 91–151 (SRLDNVVYRA…EKSQKMNWFE (61 aa)).

This sequence belongs to the universal ribosomal protein uS4 family. In terms of assembly, part of the 30S ribosomal subunit. Contacts protein S5. The interaction surface between S4 and S5 is involved in control of translational fidelity.

Functionally, one of the primary rRNA binding proteins, it binds directly to 16S rRNA where it nucleates assembly of the body of the 30S subunit. In terms of biological role, with S5 and S12 plays an important role in translational accuracy. This Corynebacterium glutamicum (strain ATCC 13032 / DSM 20300 / JCM 1318 / BCRC 11384 / CCUG 27702 / LMG 3730 / NBRC 12168 / NCIMB 10025 / NRRL B-2784 / 534) protein is Small ribosomal subunit protein uS4.